The following is an 865-amino-acid chain: Aconitate hydratase B (865 aa).

Residues Arg191, 244–246 (SSR), 414–416 (QDT), and Ser498 contribute to the substrate site. The [4Fe-4S] cluster site is built by Cys710, Cys769, and Cys772. Substrate-binding residues include Arg791 and Arg796.

Belongs to the aconitase/IPM isomerase family. In terms of assembly, monomer. Requires [4Fe-4S] cluster as cofactor.

The catalysed reaction is citrate = D-threo-isocitrate. The enzyme catalyses (2S,3R)-3-hydroxybutane-1,2,3-tricarboxylate = 2-methyl-cis-aconitate + H2O. It functions in the pathway carbohydrate metabolism; tricarboxylic acid cycle; isocitrate from oxaloacetate: step 2/2. Its pathway is organic acid metabolism; propanoate degradation. In terms of biological role, involved in the catabolism of short chain fatty acids (SCFA) via the tricarboxylic acid (TCA)(acetyl degradation route) and the 2-methylcitrate cycle I (propionate degradation route). Catalyzes the reversible isomerization of citrate to isocitrate via cis-aconitate. Also catalyzes the hydration of 2-methyl-cis-aconitate to yield (2R,3S)-2-methylisocitrate. The apo form of AcnB functions as a RNA-binding regulatory protein which regulates FliC synthesis via interaction with the ftsH transcript to decrease the intracellular levels of FtsH. The lower levels of FtsH protease activity then influence sigma-32, DnaK and ultimately FliC production. In Salmonella typhimurium (strain LT2 / SGSC1412 / ATCC 700720), this protein is Aconitate hydratase B (acnB).